The following is an 82-amino-acid chain: MAAGSTGERPFFEIITSVRYWIIHAVALPAIFVAGFLFVSSGLAYDAFGTPRPDTYFQAGESKAPVVVQRFDSKAELDTRLK.

Residues 22–36 (IIHAVALPAIFVAGF) traverse the membrane as a helical segment. His-24 provides a ligand contact to heme.

The protein belongs to the PsbE/PsbF family. As to quaternary structure, heterodimer of an alpha subunit and a beta subunit. PSII is composed of 1 copy each of membrane proteins PsbA, PsbB, PsbC, PsbD, PsbE, PsbF, PsbH, PsbI, PsbJ, PsbK, PsbL, PsbM, PsbT, PsbX, PsbY, Psb30/Ycf12, peripheral proteins PsbO, CyanoQ (PsbQ), PsbU, PsbV and a large number of cofactors. It forms dimeric complexes. Heme b serves as cofactor.

It localises to the cellular thylakoid membrane. In terms of biological role, this b-type cytochrome is tightly associated with the reaction center of photosystem II (PSII). PSII is a light-driven water:plastoquinone oxidoreductase that uses light energy to abstract electrons from H(2)O, generating O(2) and a proton gradient subsequently used for ATP formation. It consists of a core antenna complex that captures photons, and an electron transfer chain that converts photonic excitation into a charge separation. This Prochlorococcus marinus (strain NATL1A) protein is Cytochrome b559 subunit alpha.